A 623-amino-acid polypeptide reads, in one-letter code: Chaperone protein DnaK (623 aa).

The residue at position 175 (threonine 175) is a Phosphothreonine; by autocatalysis. Residues 580 to 623 (PEGAQGAGFDPNNMGGANAGNASAENDKKDDNVVDADYKVEDDK) form a disordered region. A compositionally biased stretch (low complexity) spans 591–603 (NNMGGANAGNASA). The segment covering 604–623 (ENDKKDDNVVDADYKVEDDK) has biased composition (basic and acidic residues).

Belongs to the heat shock protein 70 family.

Functionally, acts as a chaperone. The sequence is that of Chaperone protein DnaK from Clostridium botulinum (strain Okra / Type B1).